Consider the following 339-residue polypeptide: tRNA N6-adenosine threonylcarbamoyltransferase (339 aa).

2 residues coordinate Fe cation: histidine 111 and histidine 115. Residues 134-138 (LVSGG), aspartate 167, glycine 180, and asparagine 274 contribute to the substrate site. A Fe cation-binding site is contributed by aspartate 302.

Belongs to the KAE1 / TsaD family. Requires Fe(2+) as cofactor.

It localises to the cytoplasm. It carries out the reaction L-threonylcarbamoyladenylate + adenosine(37) in tRNA = N(6)-L-threonylcarbamoyladenosine(37) in tRNA + AMP + H(+). Functionally, required for the formation of a threonylcarbamoyl group on adenosine at position 37 (t(6)A37) in tRNAs that read codons beginning with adenine. Is involved in the transfer of the threonylcarbamoyl moiety of threonylcarbamoyl-AMP (TC-AMP) to the N6 group of A37, together with TsaE and TsaB. TsaD likely plays a direct catalytic role in this reaction. The polypeptide is tRNA N6-adenosine threonylcarbamoyltransferase (Methylobacillus flagellatus (strain ATCC 51484 / DSM 6875 / VKM B-1610 / KT)).